Consider the following 97-residue polypeptide: UPF0250 protein HD_2015 (97 aa).

It belongs to the UPF0250 family.

The sequence is that of UPF0250 protein HD_2015 from Haemophilus ducreyi (strain 35000HP / ATCC 700724).